Here is a 341-residue protein sequence, read N- to C-terminus: tRNA N6-adenosine threonylcarbamoyltransferase (341 aa).

Positions 112 and 116 each coordinate Fe cation. Residues 138–142, Asp171, Gly184, Asp188, and Asn279 each bind substrate; that span reads TVSGG. Asp307 contributes to the Fe cation binding site.

The protein belongs to the KAE1 / TsaD family. Requires Fe(2+) as cofactor.

The protein resides in the cytoplasm. It carries out the reaction L-threonylcarbamoyladenylate + adenosine(37) in tRNA = N(6)-L-threonylcarbamoyladenosine(37) in tRNA + AMP + H(+). Its function is as follows. Required for the formation of a threonylcarbamoyl group on adenosine at position 37 (t(6)A37) in tRNAs that read codons beginning with adenine. Is involved in the transfer of the threonylcarbamoyl moiety of threonylcarbamoyl-AMP (TC-AMP) to the N6 group of A37, together with TsaE and TsaB. TsaD likely plays a direct catalytic role in this reaction. This Riemerella anatipestifer (Moraxella anatipestifer) protein is tRNA N6-adenosine threonylcarbamoyltransferase.